A 179-amino-acid chain; its full sequence is Large ribosomal subunit protein uL6 (179 aa).

This sequence belongs to the universal ribosomal protein uL6 family. In terms of assembly, part of the 50S ribosomal subunit.

Functionally, this protein binds to the 23S rRNA, and is important in its secondary structure. It is located near the subunit interface in the base of the L7/L12 stalk, and near the tRNA binding site of the peptidyltransferase center. The sequence is that of Large ribosomal subunit protein uL6 from Prochlorococcus marinus (strain NATL2A).